The primary structure comprises 337 residues: Anthranilate phosphoribosyltransferase (337 aa).

5-phospho-alpha-D-ribose 1-diphosphate is bound by residues G81, 84 to 85 (GD), S89, 91 to 94 (NVST), 109 to 117 (KHGNRALSS), and A121. G81 serves as a coordination point for anthranilate. Residue S93 coordinates Mg(2+). Position 112 (N112) interacts with anthranilate. An anthranilate-binding site is contributed by R167. D226 and E227 together coordinate Mg(2+).

It belongs to the anthranilate phosphoribosyltransferase family. Homodimer. It depends on Mg(2+) as a cofactor.

It carries out the reaction N-(5-phospho-beta-D-ribosyl)anthranilate + diphosphate = 5-phospho-alpha-D-ribose 1-diphosphate + anthranilate. The protein operates within amino-acid biosynthesis; L-tryptophan biosynthesis; L-tryptophan from chorismate: step 2/5. In terms of biological role, catalyzes the transfer of the phosphoribosyl group of 5-phosphorylribose-1-pyrophosphate (PRPP) to anthranilate to yield N-(5'-phosphoribosyl)-anthranilate (PRA). The sequence is that of Anthranilate phosphoribosyltransferase from Nitrobacter hamburgensis (strain DSM 10229 / NCIMB 13809 / X14).